We begin with the raw amino-acid sequence, 1755 residues long: Deleted in lung and esophageal cancer protein 1 (1755 aa).

Residues 1-12 (METRSSKTRRSL) show a composition bias toward basic residues. Disordered regions lie at residues 1-39 (METR…PSQP), 1339-1360 (PGPS…GSSS), and 1529-1553 (SQDG…EETA). Residues 30-39 (PAGSSSPSQP) show a composition bias toward low complexity.

In terms of assembly, interacts with alpha- and beta-tubulin. Interacts with BBS2, BBS4, BBS5, MKKS, TCP1, CCT2, CCT3, CCT4, CCT5 and CCT7. Expressed in all tissues examined. Expression is highest in prostate and testis.

It localises to the cytoplasm. Essential for spermatogenesis and male fertility. May play an important role in sperm head and tail formation. May act as a tumor suppressor by inhibiting cell proliferation. This chain is Deleted in lung and esophageal cancer protein 1, found in Homo sapiens (Human).